The primary structure comprises 711 residues: MESGAVLLESKSSPFNLLHEMHELRLLGHLCDVTVSVEYQGVRKDFMAHKAVLAATSKFFKEVFLNEKSVDGTRTNVYLNEVQVADFASFLEFVYTAKVQVEEDRVQRMLEVAEKLKCLDLSETCFQLKKQMLESVLLELQNFSESQEVEVSSGSQVSAAPAPRASVATDGPHPSGLTDSLDYPGERASNGMSSDLPPKKSKDKLDKKKEVVKPPYPKIRRASGRLAGRKVFVEIPKKKYTRRLREQQKTAEGDVGDYRCPQDQSPDRVGTEMEQVSKNEGCQAGAELEELSKKAGPEEEEEEEEEDEEGEKKKSNFKCSICEKAFLYEKSFLKHSKHRHGVATEVVYRCDTCGQTFANRCNLKSHQRHVHSSERHFPCELCGKKFKRKKDVKRHVLQVHEGGGERHRCGQCGKGLSSKTALRLHERTHTGDRPYGCTECGARFSQPSALKTHMRIHTGEKPFVCDECGARFTQNHMLIYHKRCHTGERPFMCETCGKSFASKEYLKHHNRIHTGSKPFKCEVCFRTFAQRNSLYQHIKVHTGERPYCCDQCGKQFTQLNALQRHRRIHTGERPFMCNACGRTFTDKSTLRRHTSIHDKNTPWKSFLVIVDGSPKNDDGHKTEQPDEEYVSSKLSDKLLSFAENGHFHNLAAVQDTVPTMQENSSADTACKADDSVVSQDTLLATTISELSELTPQTDSMPTQLHSLSNME.

One can recognise a BTB domain in the interval 31–103 (CDVTVSVEYQ…VYTAKVQVEE (73 aa)). Residues 153–168 (SGSQVSAAPAPRASVA) show a composition bias toward low complexity. Disordered stretches follow at residues 153-220 (SGSQ…PKIR) and 243-312 (RLRE…EGEK). 3 stretches are compositionally biased toward basic and acidic residues: residues 197-212 (PPKKSKDKLDKKKEVV), 243-252 (RLREQQKTAE), and 265-277 (SPDRVGTEMEQVS). A compositionally biased stretch (acidic residues) spans 298–309 (EEEEEEEEEDEE). 10 consecutive C2H2-type zinc fingers follow at residues 317 to 340 (FKCSICEKAFLYEKSFLKHSKHRH), 348 to 371 (YRCDTCGQTFANRCNLKSHQRHVH), 377 to 400 (FPCELCGKKFKRKKDVKRHVLQVH), 407 to 429 (HRCGQCGKGLSSKTALRLHERTH), 435 to 457 (YGCTECGARFSQPSALKTHMRIH), 463 to 485 (FVCDECGARFTQNHMLIYHKRCH), 491 to 513 (FMCETCGKSFASKEYLKHHNRIH), 519 to 541 (FKCEVCFRTFAQRNSLYQHIKVH), 547 to 569 (YCCDQCGKQFTQLNALQRHRRIH), and 575 to 597 (FMCNACGRTFTDKSTLRRHTSIH). Ser613 is subject to Phosphoserine.

Belongs to the krueppel C2H2-type zinc-finger protein family. In terms of assembly, interacts with NCL. In terms of tissue distribution, expressed in adult brain, heart, skeletal muscle, kidney and liver. Also detected in fetal brain and kidney, and at lower levels in fetal lung and liver.

Its subcellular location is the cytoplasm. The protein resides in the nucleus. It is found in the nucleoplasm. It localises to the nucleolus. In terms of biological role, transcriptional repressor that binds the GZF1 responsive element (GRE) (consensus: 5'-TGCGCN[TG][CA]TATA-3'). May be regulating VSX2/HOX10 expression. This Homo sapiens (Human) protein is GDNF-inducible zinc finger protein 1.